The following is a 172-amino-acid chain: Small ribosomal subunit protein uS5 (172 aa).

The S5 DRBM domain occupies 11-74 (LFESVVDIAR…RKAKGAMIRF (64 aa)).

The protein belongs to the universal ribosomal protein uS5 family. As to quaternary structure, part of the 30S ribosomal subunit. Contacts proteins S4 and S8.

Its function is as follows. With S4 and S12 plays an important role in translational accuracy. Functionally, located at the back of the 30S subunit body where it stabilizes the conformation of the head with respect to the body. This is Small ribosomal subunit protein uS5 from Neorickettsia sennetsu (strain ATCC VR-367 / Miyayama) (Ehrlichia sennetsu).